Reading from the N-terminus, the 537-residue chain is O-phosphoserine--tRNA(Cys) ligase (537 aa).

Residues 186-188, 231-233, 273-274, and Asn317 each bind substrate; these read HMT, SAS, and YY.

This sequence belongs to the class-II aminoacyl-tRNA synthetase family. O-phosphoseryl-tRNA(Cys) synthetase subfamily. In terms of assembly, homotetramer. Interacts with SepCysS.

It catalyses the reaction tRNA(Cys) + O-phospho-L-serine + ATP = O-phospho-L-seryl-tRNA(Cys) + AMP + diphosphate. In terms of biological role, catalyzes the attachment of O-phosphoserine (Sep) to tRNA(Cys). The sequence is that of O-phosphoserine--tRNA(Cys) ligase from Methanococcus maripaludis (strain C7 / ATCC BAA-1331).